The following is a 362-amino-acid chain: D-alanine--D-alanine ligase (362 aa).

The ATP-grasp domain maps to 134 to 345 (KILAQRAGVP…YPDLITRLIR (212 aa)). 170-225 (GQLGTSNLFVKPSNQGSSVGITHVTDDSNYAEALAEAFKYDDKVLVEEGIVGTEVE) lines the ATP pocket. Mg(2+)-binding residues include aspartate 298, glutamate 312, and asparagine 314.

The protein belongs to the D-alanine--D-alanine ligase family. The cofactor is Mg(2+). Requires Mn(2+) as cofactor.

The protein localises to the cytoplasm. The catalysed reaction is 2 D-alanine + ATP = D-alanyl-D-alanine + ADP + phosphate + H(+). The protein operates within cell wall biogenesis; peptidoglycan biosynthesis. Cell wall formation. The polypeptide is D-alanine--D-alanine ligase (Lactobacillus delbrueckii subsp. bulgaricus (strain ATCC 11842 / DSM 20081 / BCRC 10696 / JCM 1002 / NBRC 13953 / NCIMB 11778 / NCTC 12712 / WDCM 00102 / Lb 14)).